Reading from the N-terminus, the 127-residue chain is Translation initiation factor 5A (127 aa).

Residue K35 is modified to Hypusine.

Belongs to the eIF-5A family.

Its subcellular location is the cytoplasm. In terms of biological role, functions by promoting the formation of the first peptide bond. This Methanospirillum hungatei JF-1 (strain ATCC 27890 / DSM 864 / NBRC 100397 / JF-1) protein is Translation initiation factor 5A.